A 476-amino-acid chain; its full sequence is Calcium/calmodulin-dependent protein kinase type 1G (476 aa).

Residues 23–277 form the Protein kinase domain; it reads FIFMEVLGSG…CEKALSHPWI (255 aa). ATP contacts are provided by residues 29-37 and lysine 52; that span reads LGSGAFSEV. Aspartate 143 acts as the Proton acceptor in catalysis. The segment at 277 to 317 is autoinhibitory domain; sequence IDGNTALHRDIYPSVSLQIQKNFAKSKWRQAFNAAAVVHHM. The calmodulin-binding stretch occupies residues 297–318; that stretch reads KNFAKSKWRQAFNAAAVVHHMR. Positions 325 to 352 are disordered; it reads HSPGVRPEVENRPPETQASETSRPSSPE. Over residues 338 to 352 the composition is skewed to polar residues; that stretch reads PETQASETSRPSSPE.

The protein belongs to the protein kinase superfamily. CAMK Ser/Thr protein kinase family. CaMK subfamily. May be prenylated on Cys-473. In terms of tissue distribution, mainly expressed in brain with small amounts in skeletal muscles, kidney, spleen and liver. Strongly expressed in forebrain neocortex, striatum and limbic system.

It localises to the cytoplasm. The protein localises to the golgi apparatus membrane. The protein resides in the cell membrane. The catalysed reaction is L-seryl-[protein] + ATP = O-phospho-L-seryl-[protein] + ADP + H(+). It carries out the reaction L-threonyl-[protein] + ATP = O-phospho-L-threonyl-[protein] + ADP + H(+). With respect to regulation, activated by Ca(2+)/calmodulin. Binding of calmodulin is thought to result in a conformational change and leads to activation through phosphorylation by CAMKK1. Its function is as follows. Calcium/calmodulin-dependent protein kinase belonging to a proposed calcium-triggered signaling cascade. In vitro phosphorylates transcription factor CREB1. The chain is Calcium/calmodulin-dependent protein kinase type 1G (CAMK1G) from Homo sapiens (Human).